The primary structure comprises 532 residues: Spore coat protein SP85 (532 aa).

Residues M1–A19 form the signal peptide. An N-linked (GlcNAc...) asparagine glycan is attached at N47. Positions T197–V265 are disordered. The span at T201 to P263 shows a compositional bias: pro residues. The region spanning D267–V289 is the Follistatin-like 1 domain. Residues T297–P320 form a disordered region. Follistatin-like domains are found at residues S335–V359, T400–V423, and T430–V452.

As to quaternary structure, binds to cotE. O-glycosylated.

The protein localises to the spore wall. Functionally, required for incorporation of cotE into the spore coat and for the formation of the outer layer. Has a cross-bridging function between cellulose and other coat proteins. The chain is Spore coat protein SP85 (pspB) from Dictyostelium discoideum (Social amoeba).